Here is a 221-residue protein sequence, read N- to C-terminus: Putative efflux system component YhbJ (221 aa).

The helical transmembrane segment at 17–37 (LILTNIIGLIVVLAIIAGGAY) threads the bilayer.

It belongs to the membrane fusion protein (MFP) (TC 8.A.1) family.

Its subcellular location is the cell membrane. In Bacillus subtilis (strain 168), this protein is Putative efflux system component YhbJ (yhbJ).